Reading from the N-terminus, the 273-residue chain is MPLPLLLAALCLAASPAPARACQLPSEWRPLSEGCRAELAETIVYAKVLALHPEVPGLYNYLPWQYQAGEGGLFYSAEVEMLCDQAWGSMLEVPAGSRLNLTGLGYFSCHSHTVVQDYSYFFFVRMDENYNLLPHGVNFQDAIFPDTQENRRMFSSLFQFANCSQGQQLTTFSSDWEVQEDNRLMCSSVQKALFEEEDHVKKLQQKVATLEKRNRQLRERVKKVKRSLRQARKNSRHLELVNQKLNEKLGASSAQQHINALGREPVRAPYLHG.

The N-terminal stretch at 1–21 (MPLPLLLAALCLAASPAPARA) is a signal peptide. Residue N100 is glycosylated (N-linked (GlcNAc...) asparagine). The stretch at 188 to 250 (SVQKALFEEE…VNQKLNEKLG (63 aa)) forms a coiled coil.

In terms of assembly, homodimer. Post-translationally, N-glycosylated. Expressed in aorta and adipose tissue. Enriched in mature adipocytes. Over-expressed in adipose tissue from either hormonally-induced or nutritionally-regulated obese mice models.

The protein localises to the secreted. Negatively regulates TNF-alpha-induced pro-inflammatory response in endothelial cells (ECs) via inhibition of TNF-alpha-induced NF-kappaB activation in ECs. Positively regulates lipid accumulation in adipose cells. The chain is Coiled-coil domain-containing protein 3 (Ccdc3) from Mus musculus (Mouse).